Here is a 442-residue protein sequence, read N- to C-terminus: D(2) dopamine receptor A (442 aa).

The Extracellular segment spans residues 1–31 (MDPQNLSMYNDDINNGTNGTAVDQKPHYNYY). Residues N5, N15, and N18 are each glycosylated (N-linked (GlcNAc...) asparagine). A helical transmembrane segment spans residues 32-54 (AMLLTLLVFVIVFGNVLVCIAVS). At 55-64 (REKALQTTTN) the chain is on the cytoplasmic side. Residues 65–87 (YLIVSLAVADLLVATLVMPWAVY) traverse the membrane as a helical segment. The Extracellular segment spans residues 88 to 102 (MEVVGEWRFSRIHCD). The cysteines at positions 101 and 176 are disulfide-linked. A helical transmembrane segment spans residues 103 to 124 (IFVTLDVMMCTASILNLCAISI). The Cytoplasmic segment spans residues 125 to 145 (DRYTAVAMPMLYNTRYSSKRR). The chain crosses the membrane as a helical span at residues 146–166 (VTVMISVVWVLSFAISCPLLF). Residues 167–182 (GLNNTGSKVCIIDNPA) are Extracellular-facing. The chain crosses the membrane as a helical span at residues 183–207 (FVIYSSIVSFYVPFIVTLLVYVQIY). Residues 208 to 372 (IVLRKRRKRV…SQHKEKKATQ (165 aa)) are Cytoplasmic-facing. The interval 273-335 (DMEMEMMSST…KNGHPKDSTK (63 aa)) is disordered. Positions 304-318 (ATSNQCKNASLTSPV) are enriched in polar residues. Over residues 322-335 (YKAEKNGHPKDSTK) the composition is skewed to basic and acidic residues. The helical transmembrane segment at 373–394 (MLAIVLGVFIICWLPFFIIHIL) threads the bilayer. The Extracellular segment spans residues 395–408 (NMHCNCNIPQALYS). Cysteines 398 and 400 form a disulfide. The helical transmembrane segment at 409 to 430 (AFTWLGYVNSAVNPIIYTTFNV) threads the bilayer. Topologically, residues 431–442 (EFRKAFIKILHC) are cytoplasmic. C442 is lipidated: S-palmitoyl cysteine.

This sequence belongs to the G-protein coupled receptor 1 family. In terms of processing, palmitoylated. Palmitoylation is probably required for proper localization to the plasma membrane and stability of the receptor. As to expression, brain; pituitary.

The protein resides in the cell membrane. The protein localises to the golgi apparatus membrane. This is one of the five types (D1 to D5) of receptors for dopamine. The activity of this receptor is mediated by G proteins which inhibits adenylyl cyclase. In Xenopus D2R is involved in the regulation of the melanotrope cells of the intermediate pituitary during background adaptation of the animal. This Xenopus laevis (African clawed frog) protein is D(2) dopamine receptor A (drd2-a).